A 79-amino-acid polypeptide reads, in one-letter code: UPF0180 protein BCAH820_1484 (79 aa).

Belongs to the UPF0180 family.

The sequence is that of UPF0180 protein BCAH820_1484 from Bacillus cereus (strain AH820).